Consider the following 207-residue polypeptide: Octanoyltransferase (207 aa).

In terms of domain architecture, BPL/LPL catalytic spans 27 to 203; that stretch reads ASTEDELWVV…HLETQFTPKA (177 aa). Substrate-binding positions include 66–73, 133–135, and 146–148; these read RGGQITYH, SLG, and GLA. Cys-164 serves as the catalytic Acyl-thioester intermediate.

It belongs to the LipB family.

It is found in the cytoplasm. It carries out the reaction octanoyl-[ACP] + L-lysyl-[protein] = N(6)-octanoyl-L-lysyl-[protein] + holo-[ACP] + H(+). It functions in the pathway protein modification; protein lipoylation via endogenous pathway; protein N(6)-(lipoyl)lysine from octanoyl-[acyl-carrier-protein]: step 1/2. Its function is as follows. Catalyzes the transfer of endogenously produced octanoic acid from octanoyl-acyl-carrier-protein onto the lipoyl domains of lipoate-dependent enzymes. Lipoyl-ACP can also act as a substrate although octanoyl-ACP is likely to be the physiological substrate. This Neisseria meningitidis serogroup C / serotype 2a (strain ATCC 700532 / DSM 15464 / FAM18) protein is Octanoyltransferase.